We begin with the raw amino-acid sequence, 157 residues long: Small ribosomal subunit protein uS7 (157 aa).

It belongs to the universal ribosomal protein uS7 family. In terms of assembly, part of the 30S ribosomal subunit. Contacts proteins S9 and S11.

Its function is as follows. One of the primary rRNA binding proteins, it binds directly to 16S rRNA where it nucleates assembly of the head domain of the 30S subunit. Is located at the subunit interface close to the decoding center, probably blocks exit of the E-site tRNA. The polypeptide is Small ribosomal subunit protein uS7 (Eikenella corrodens).